The chain runs to 210 residues: NAD(P)H-quinone oxidoreductase subunit I (210 aa).

4Fe-4S ferredoxin-type domains lie at 54–83 and 94–123; these read GRIH…VDWA and YSYS…VTED. [4Fe-4S] cluster-binding residues include cysteine 63, cysteine 66, cysteine 69, cysteine 73, cysteine 103, cysteine 106, cysteine 109, and cysteine 113.

Belongs to the complex I 23 kDa subunit family. As to quaternary structure, NDH-1 is composed of at least 11 different subunits. The cofactor is [4Fe-4S] cluster.

It localises to the cellular thylakoid membrane. It carries out the reaction a plastoquinone + NADH + (n+1) H(+)(in) = a plastoquinol + NAD(+) + n H(+)(out). The enzyme catalyses a plastoquinone + NADPH + (n+1) H(+)(in) = a plastoquinol + NADP(+) + n H(+)(out). Its function is as follows. NDH-1 shuttles electrons from an unknown electron donor, via FMN and iron-sulfur (Fe-S) centers, to quinones in the respiratory and/or the photosynthetic chain. The immediate electron acceptor for the enzyme in this species is believed to be plastoquinone. Couples the redox reaction to proton translocation, and thus conserves the redox energy in a proton gradient. The chain is NAD(P)H-quinone oxidoreductase subunit I from Synechococcus sp. (strain JA-2-3B'a(2-13)) (Cyanobacteria bacterium Yellowstone B-Prime).